The following is a 183-amino-acid chain: Nucleoside triphosphate pyrophosphatase (183 aa).

Asp-71 acts as the Proton acceptor in catalysis.

The protein belongs to the Maf family. It depends on a divalent metal cation as a cofactor.

It localises to the cytoplasm. It carries out the reaction a ribonucleoside 5'-triphosphate + H2O = a ribonucleoside 5'-phosphate + diphosphate + H(+). It catalyses the reaction a 2'-deoxyribonucleoside 5'-triphosphate + H2O = a 2'-deoxyribonucleoside 5'-phosphate + diphosphate + H(+). In terms of biological role, nucleoside triphosphate pyrophosphatase. May have a dual role in cell division arrest and in preventing the incorporation of modified nucleotides into cellular nucleic acids. The polypeptide is Nucleoside triphosphate pyrophosphatase (Campylobacter jejuni subsp. doylei (strain ATCC BAA-1458 / RM4099 / 269.97)).